The primary structure comprises 258 residues: Imidazole glycerol phosphate synthase subunit HisF (258 aa).

Catalysis depends on residues Asp-11 and Asp-130.

This sequence belongs to the HisA/HisF family. In terms of assembly, heterodimer of HisH and HisF.

Its subcellular location is the cytoplasm. It catalyses the reaction 5-[(5-phospho-1-deoxy-D-ribulos-1-ylimino)methylamino]-1-(5-phospho-beta-D-ribosyl)imidazole-4-carboxamide + L-glutamine = D-erythro-1-(imidazol-4-yl)glycerol 3-phosphate + 5-amino-1-(5-phospho-beta-D-ribosyl)imidazole-4-carboxamide + L-glutamate + H(+). Its pathway is amino-acid biosynthesis; L-histidine biosynthesis; L-histidine from 5-phospho-alpha-D-ribose 1-diphosphate: step 5/9. Its function is as follows. IGPS catalyzes the conversion of PRFAR and glutamine to IGP, AICAR and glutamate. The HisF subunit catalyzes the cyclization activity that produces IGP and AICAR from PRFAR using the ammonia provided by the HisH subunit. This chain is Imidazole glycerol phosphate synthase subunit HisF, found in Yersinia enterocolitica serotype O:8 / biotype 1B (strain NCTC 13174 / 8081).